An 83-amino-acid polypeptide reads, in one-letter code: High-potential iron-sulfur protein (83 aa).

[4Fe-4S] cluster is bound by residues Cys43, Cys46, Cys61, and Cys75.

Belongs to the high-potential iron-sulfur protein (HiPIP) family. As to quaternary structure, homodimer.

The protein localises to the periplasm. Specific class of high-redox-potential 4Fe-4S ferredoxins. Functions in anaerobic electron transport in most purple and in some other photosynthetic bacteria and in at least one genus (Paracoccus) of halophilic, denitrifying bacteria. The protein is High-potential iron-sulfur protein of Isochromatium buderi (Chromatium buderi).